The chain runs to 468 residues: ATP synthase subunit beta (468 aa).

Residue 156-163 (GGAGVGKT) coordinates ATP.

This sequence belongs to the ATPase alpha/beta chains family. In terms of assembly, F-type ATPases have 2 components, CF(1) - the catalytic core - and CF(0) - the membrane proton channel. CF(1) has five subunits: alpha(3), beta(3), gamma(1), delta(1), epsilon(1). CF(0) has three main subunits: a(1), b(2) and c(9-12). The alpha and beta chains form an alternating ring which encloses part of the gamma chain. CF(1) is attached to CF(0) by a central stalk formed by the gamma and epsilon chains, while a peripheral stalk is formed by the delta and b chains.

The protein resides in the cell inner membrane. It carries out the reaction ATP + H2O + 4 H(+)(in) = ADP + phosphate + 5 H(+)(out). Its function is as follows. Produces ATP from ADP in the presence of a proton gradient across the membrane. The catalytic sites are hosted primarily by the beta subunits. In Sulfurimonas denitrificans (strain ATCC 33889 / DSM 1251) (Thiomicrospira denitrificans (strain ATCC 33889 / DSM 1251)), this protein is ATP synthase subunit beta.